The primary structure comprises 201 residues: Orotate phosphoribosyltransferase (201 aa).

Residues lysine 90 and 113-121 (EDIITTGGS) contribute to the 5-phospho-alpha-D-ribose 1-diphosphate site. Residues threonine 117 and arginine 145 each coordinate orotate.

The protein belongs to the purine/pyrimidine phosphoribosyltransferase family. PyrE subfamily. As to quaternary structure, homodimer. Mg(2+) serves as cofactor.

It catalyses the reaction orotidine 5'-phosphate + diphosphate = orotate + 5-phospho-alpha-D-ribose 1-diphosphate. Its pathway is pyrimidine metabolism; UMP biosynthesis via de novo pathway; UMP from orotate: step 1/2. Its function is as follows. Catalyzes the transfer of a ribosyl phosphate group from 5-phosphoribose 1-diphosphate to orotate, leading to the formation of orotidine monophosphate (OMP). The chain is Orotate phosphoribosyltransferase from Sulfurovum sp. (strain NBC37-1).